The sequence spans 497 residues: uncharacterized protein (497 aa).

Residues 1–16 (MSTTTETVTWSQYKPQ) are compositionally biased toward polar residues. The tract at residues 1–29 (MSTTTETVTWSQYKPQETQRRLSRSSTIT) is disordered. S64 carries the phosphoserine modification. 6 helical membrane-spanning segments follow: residues 86–106 (IALV…ALPI), 120–140 (FSGL…YPML), 155–175 (FRPL…YSLA), 180–200 (WLYL…MFLY), 222–242 (LNIL…GILA), and 258–278 (AGSW…SIFF). Position 295 is a phosphoserine (S295). 6 helical membrane passes run 309 to 329 (FMLC…AGYQ), 348 to 368 (GNFL…STFL), 377 to 397 (IMLY…VLDA), 407 to 427 (FVLY…LVSL), 443 to 463 (VVQV…GAIF), and 468 to 488 (VGFI…LLYL).

The protein localises to the membrane. This is an uncharacterized protein from Schizosaccharomyces pombe (strain 972 / ATCC 24843) (Fission yeast).